An 86-amino-acid chain; its full sequence is Probable oxaloacetate decarboxylase gamma chain 1 (86 aa).

Residues 11–33 (AATLMVTGMAVVFLFLTLLVYLV) form a helical membrane-spanning segment.

The protein belongs to the OadG family. As to quaternary structure, heterotrimer of an alpha, a beta and a gamma subunit. Na(+) is required as a cofactor.

It is found in the cell membrane. The catalysed reaction is oxaloacetate + 2 Na(+)(in) + H(+) = pyruvate + 2 Na(+)(out) + CO2. Its function is as follows. Catalyzes the decarboxylation of oxaloacetate coupled to Na(+) translocation. In Vibrio cholerae serotype O1 (strain ATCC 39315 / El Tor Inaba N16961), this protein is Probable oxaloacetate decarboxylase gamma chain 1 (oadG1).